The following is a 545-amino-acid chain: MAKEIKFSDSARNKLFNGVQQLFDAVKVTMGPRGRNVLIQKSYGAPVITKDGVSVAKEVDLTNPIENMGAQLVKDVASKTADEAGDGTTTATVLAYGVFKEGLRNVISGANPIEIKRGMDKTVNAIVNELNKSSKKIARKDEIIQVATISANSDKKIGELIANAMEKVGSDGVITVEEAKGINDELTVVEGMQFDRGYISPYFVTDTNKMIAKLENPYILITDKKVSSIKDILPILEEIMKTGRPLLIIADDVDGEALTTLVVNKMRGVFNVVAVKAPEFGDKRKQVLEDIAILTGGSFVTDDLGISFDKVTLQDLGQAESVVIDKDNSTIVKGKGLESQIKERISKIKTAIEMTDSDYDKDSLRNRLAKLNKGVAVIKVGAVSEVELKEKKDRVDDALSATKAAIEEGIVIGGGAALVHVSKRINVNTLNLIGDEKIGYQIVMSAIMSPISQIVSNAGFDKGVVINEILKATNPHLGFNAATGKYVDMFQTGIIDPVKVTRIALQNAVSVSSMLLTTEAVIYDVKDDKEDSVPAMPNMGMGGMM.

Residues 29-32, Lys50, 86-90, Gly414, 480-482, and Asp496 each bind ATP; these read TMGP, DGTTT, and NAA.

Belongs to the chaperonin (HSP60) family. Forms a cylinder of 14 subunits composed of two heptameric rings stacked back-to-back. Interacts with the co-chaperonin GroES.

It localises to the cytoplasm. It catalyses the reaction ATP + H2O + a folded polypeptide = ADP + phosphate + an unfolded polypeptide.. Functionally, together with its co-chaperonin GroES, plays an essential role in assisting protein folding. The GroEL-GroES system forms a nano-cage that allows encapsulation of the non-native substrate proteins and provides a physical environment optimized to promote and accelerate protein folding. The protein is Chaperonin GroEL of Malacoplasma penetrans (strain HF-2) (Mycoplasma penetrans).